Here is a 344-residue protein sequence, read N- to C-terminus: UPF0283 membrane protein YcjF (344 aa).

Helical transmembrane passes span 70–90 (MVMG…VQWT), 100–120 (VALG…GSVV), and 213–233 (ESTL…FIAW).

It belongs to the UPF0283 family.

The protein resides in the cell inner membrane. This is UPF0283 membrane protein YcjF from Shigella dysenteriae serotype 1 (strain Sd197).